Here is a 1828-residue protein sequence, read N- to C-terminus: Separin (1828 aa).

The Peptidase C50 domain maps to 1647-1741 (KEAGSYILNP…SGALYECGSF (95 aa)). The active site involves C1730.

As to quaternary structure, interacts with cut2. Interacts with rad21.

Its subcellular location is the cytoplasm. The protein localises to the nucleus. The enzyme catalyses All bonds known to be hydrolyzed by this endopeptidase have arginine in P1 and an acidic residue in P4. P6 is often occupied by an acidic residue or by a hydroxy-amino-acid residue, the phosphorylation of which enhances cleavage.. With respect to regulation, it is inactivated via its interaction with cut2, which probably covers its active site. Cut2 degradation at anaphase, liberates it and triggers rad21 cleavage. In terms of biological role, caspase-like protease, which plays a central role in the chromosome segregation by cleaving the rad21 subunit of the cohesin complex at the onset of anaphase. During most of the cell cycle, it is inactivated by securin/cut2 protein. It is also required for pointed nuclear formation. The chain is Separin (cut1) from Schizosaccharomyces pombe (strain 972 / ATCC 24843) (Fission yeast).